Here is a 440-residue protein sequence, read N- to C-terminus: Proton extrusion protein PxcA (440 aa).

Transmembrane regions (helical) follow at residues 222–242 (FVLT…TFFL), 316–336 (NAIA…LVLV), 352–374 (IVYG…MFVG), and 400–420 (FNFL…KYWI).

Belongs to the CemA family.

It is found in the cell inner membrane. Functionally, required for H(+) efflux immediately after light irradiation to form a rapid H(+) concentration gradient across the thylakoid membranes. Together with PxcL, contributes to transient H(+) uptake following dark to light transition. Involved in light-induced Na(+)-dependent proton extrusion. Also seems to be involved in CO(2) transport. The sequence is that of Proton extrusion protein PxcA from Synechocystis sp. (strain ATCC 27184 / PCC 6803 / Kazusa).